We begin with the raw amino-acid sequence, 76 residues long: Putative cation transport regulator ChaB (76 aa).

It belongs to the ChaB family. In terms of assembly, monomer.

Functionally, might be a regulator of the sodium-potassium/proton antiporter ChaA. This Escherichia coli O157:H7 protein is Putative cation transport regulator ChaB.